The sequence spans 1752 residues: Gag-Pol polyprotein (1752 aa).

Gly2 is lipidated: N-myristoyl glycine; by host. Residues Ala154–Leu185 are a coiled coil. Residues Arg168 to Arg178 show a composition bias toward basic and acidic residues. The tract at residues Arg168–Val222 is disordered. A compositionally biased stretch (polar residues) spans Ala201–Asn217. The segment at Asn501–Asn518 adopts a CCHC-type zinc-finger fold. Residues Ile618–Thr694 enclose the Peptidase A2 domain. Asp623 acts as the Protease; shared with dimeric partner in catalysis. One can recognise a Reverse transcriptase domain in the interval Glu793–Leu977. Mg(2+) contacts are provided by Asp861, Asp928, Asp929, Asp1231, Glu1269, Asp1290, Asp1360, Asp1493, and Asp1550. Residues Pro1222–Phe1368 enclose the RNase H type-1 domain. An Integrase catalytic domain is found at Leu1482 to Pro1638.

Homohexamer. Further associates as homomultimer. The virus core is composed of a lattice formed from hexagonal rings, each containing six capsid monomers. The protease is a homodimer, whose active site consists of two apposed aspartic acid residues. The reverse transcriptase is a monomer. Mg(2+) serves as cofactor. Post-translationally, specific enzymatic cleavages by the viral protease yield mature proteins. The protease is released by autocatalytic cleavage. The polyprotein is cleaved during and after budding, this process is termed maturation.

It localises to the host cell membrane. Its subcellular location is the virion. The enzyme catalyses DNA(n) + a 2'-deoxyribonucleoside 5'-triphosphate = DNA(n+1) + diphosphate. The catalysed reaction is Endonucleolytic cleavage to 5'-phosphomonoester.. Its function is as follows. Targets Gag and gag-pol polyproteins to the plasma membrane via a multipartite membrane binding signal, that includes its myristoylated N-terminus. Also mediates nuclear localization of the pre-integration complex. Capsid protein p25 forms the spherical core of the virion that encapsulates the genomic RNA-nucleocapsid complex. Functionally, involved in the packaging and encapsidation of two copies of the genome. Binds with high affinity to conserved UCUG elements within the packaging signal, located near the 5'-end of the genome. This binding is dependent on genome dimerization. In terms of biological role, mediates proteolytic cleavages of Gag and Gag-Pol polyproteins during or shortly after the release of the virion from the plasma membrane. Cleavages take place as an ordered, step-wise cascade to yield mature proteins. This process is called maturation. Displays maximal activity during the budding process just prior to particle release from the cell. Its function is as follows. Is a multifunctional enzyme that converts the viral dimeric RNA genome into dsDNA in the cytoplasm, shortly after virus entry into the cell. This enzyme displays a DNA polymerase activity that can copy either DNA or RNA templates, and a ribonuclease H (RNase H) activity that cleaves the RNA strand of RNA-DNA heteroduplexes in a partially processive 3' to 5' endonucleasic mode. Conversion of viral genomic RNA into dsDNA requires many steps. A tRNA binds to the primer-binding site (PBS) situated at the 5' end of the viral RNA. RT uses the 3' end of the tRNA primer to perform a short round of RNA-dependent minus-strand DNA synthesis. The reading proceeds through the U5 region and ends after the repeated (R) region which is present at both ends of viral RNA. The portion of the RNA-DNA heteroduplex is digested by the RNase H, resulting in a ssDNA product attached to the tRNA primer. This ssDNA/tRNA hybridizes with the identical R region situated at the 3' end of viral RNA. This template exchange, known as minus-strand DNA strong stop transfer, can be either intra- or intermolecular. RT uses the 3' end of this newly synthesized short ssDNA to perform the RNA-dependent minus-strand DNA synthesis of the whole template. RNase H digests the RNA template except for a polypurine tract (PPT) situated at the 5' end of the genome. It is not clear if both polymerase and RNase H activities are simultaneous. RNase H probably can proceed both in a polymerase-dependent (RNA cut into small fragments by the same RT performing DNA synthesis) and a polymerase-independent mode (cleavage of remaining RNA fragments by free RTs). Secondly, RT performs DNA-directed plus-strand DNA synthesis using the PPT that has not been removed by RNase H as primers. PPT and tRNA primers are then removed by RNase H. The 3' and 5' ssDNA PBS regions hybridize to form a circular dsDNA intermediate. Strand displacement synthesis by RT to the PBS and PPT ends produces a blunt ended, linear dsDNA copy of the viral genome that includes long terminal repeats (LTRs) at both ends. Catalyzes viral DNA integration into the host chromosome, by performing a series of DNA cutting and joining reactions. This enzyme activity takes place after virion entry into a cell and reverse transcription of the RNA genome in dsDNA. The first step in the integration process is 3' processing. This step requires a complex comprising the viral genome, matrix protein and integrase. This complex is called the pre-integration complex (PIC). The integrase protein removes 2 nucleotides from each 3' end of the viral DNA, leaving recessed CA OH's at the 3' ends. In the second step that requires cell division, the PIC enters cell nucleus. In the third step, termed strand transfer, the integrase protein joins the previously processed 3' ends to the 5' ends of strands of target cellular DNA at the site of integration. The last step is viral DNA integration into host chromosome. Functionally, plays a role in budding and is processed by the viral protease during virion maturation outside the cell. The chain is Gag-Pol polyprotein (gag-pol) from Walleye dermal sarcoma virus (WDSV).